The sequence spans 527 residues: Zinc finger CCCH-type with G patch domain-containing protein (527 aa).

The segment at 97–126 (GEVSGSSSDMREREDEREEEDDGEVEGEVD) is disordered. Residues 111 to 125 (DEREEEDDGEVEGEV) show a composition bias toward acidic residues. The C3H1-type zinc-finger motif lies at 173 to 200 (QKSMKPCPFFLEDKCRFADNCRFSHGEV). Residues 268–312 (LREDDLPSCSDSEDDDNGEGEAAFPRVLTQEEDWAPSRSSSAFGG) form a disordered region. One can recognise a G-patch domain in the interval 317 to 363 (TRGIGSKLMLKMGYEYGKGLGKTSEGRVEPVLAVVLPKGKSLDQCAE). 3 disordered regions span residues 369–396 (TQRKVAKGKDGQQVSRNKRTRKARAHNT), 410–444 (LGNGDANPEAGGTCGPPPSHTPSSQGAGVEAYKGG), and 505–527 (KAQELSAQRENRKADTHKKMTEF). Positions 384 to 393 (RNKRTRKARA) are enriched in basic residues. Residues 511 to 527 (AQRENRKADTHKKMTEF) show a composition bias toward basic and acidic residues.

Its subcellular location is the nucleus. Functionally, transcription repressor that specifically binds the 5'-GGAG[GA]A[GA]A-3' consensus sequence. Represses transcription by recruiting the chromatin multiprotein complex NuRD to target promoters. Negatively regulates expression of EGFR, a gene involved in cell proliferation, survival and migration. In Salmo salar (Atlantic salmon), this protein is Zinc finger CCCH-type with G patch domain-containing protein (zgpat).